Consider the following 243-residue polypeptide: Anti-H(O) lectin 2 (243 aa).

N-linked (GlcNAc...) asparagine glycosylation occurs at asparagine 115. The Mn(2+) site is built by glutamate 127 and aspartate 129. Residues aspartate 129, asparagine 136, and aspartate 139 each coordinate Ca(2+). The Mn(2+) site is built by aspartate 139 and histidine 144.

It belongs to the leguminous lectin family. As to quaternary structure, homodimer.

Functionally, lactose- or galactose-binding anti-H(O) lectin. This is Anti-H(O) lectin 2 from Cytisophyllum sessilifolium (Sessile-leaved cytisus).